A 128-amino-acid chain; its full sequence is Small ribosomal subunit protein eS6 (128 aa).

This sequence belongs to the eukaryotic ribosomal protein eS6 family.

The polypeptide is Small ribosomal subunit protein eS6 (Methanobrevibacter smithii (strain ATCC 35061 / DSM 861 / OCM 144 / PS)).